The sequence spans 450 residues: UDP-N-acetylmuramoylalanine--D-glutamate ligase (450 aa).

115 to 121 provides a ligand contact to ATP; the sequence is GTNGKTT.

It belongs to the MurCDEF family.

Its subcellular location is the cytoplasm. It catalyses the reaction UDP-N-acetyl-alpha-D-muramoyl-L-alanine + D-glutamate + ATP = UDP-N-acetyl-alpha-D-muramoyl-L-alanyl-D-glutamate + ADP + phosphate + H(+). It functions in the pathway cell wall biogenesis; peptidoglycan biosynthesis. Functionally, cell wall formation. Catalyzes the addition of glutamate to the nucleotide precursor UDP-N-acetylmuramoyl-L-alanine (UMA). This Caldanaerobacter subterraneus subsp. tengcongensis (strain DSM 15242 / JCM 11007 / NBRC 100824 / MB4) (Thermoanaerobacter tengcongensis) protein is UDP-N-acetylmuramoylalanine--D-glutamate ligase.